Consider the following 335-residue polypeptide: Glucan endo-1,3-beta-glucosidase, acidic isoform (335 aa).

Positions 1–29 are cleaved as a signal peptide; the sequence is MARQGVIASMHALALLLGAFAAIPTGVQS. The active-site Proton donor is the E122. The active-site Nucleophile is the E259.

The protein belongs to the glycosyl hydrolase 17 family. In terms of tissue distribution, accumulates in aleurone layers. Much lower levels are found in the embryo, and none in starchy endosperm.

It localises to the secreted. Its subcellular location is the extracellular space. It carries out the reaction Hydrolysis of (1-&gt;3)-beta-D-glucosidic linkages in (1-&gt;3)-beta-D-glucans.. Is thought to be an important plant defense-related product against fungal pathogens. In Zea mays (Maize), this protein is Glucan endo-1,3-beta-glucosidase, acidic isoform.